Reading from the N-terminus, the 557-residue chain is Copine-6 (557 aa).

C2 domains lie at serine 2 to leucine 127 and threonine 134 to aspartate 263. Ca(2+) contacts are provided by aspartate 167, aspartate 173, aspartate 229, aspartate 231, and aspartate 237. The tract at residues serine 244–cysteine 303 is linker region. Residues serine 306–valine 526 form the VWFA domain.

This sequence belongs to the copine family. As to quaternary structure, interacts (via second C2 domain) with OS9 (via C-terminus); this interaction occurs in a calcium-dependent manner in vitro. May interact with NECAB1. The cofactor is Ca(2+). Widely expressed in the brain. Expressed weakly in the kidney, liver and fetal heart. Expressed in melanocytes.

It localises to the cytoplasm. The protein localises to the cell membrane. It is found in the endosome. The protein resides in the cytoplasmic vesicle. Its subcellular location is the clathrin-coated vesicle. It localises to the perikaryon. The protein localises to the cell projection. It is found in the dendrite. Functionally, calcium-dependent phospholipid-binding protein that plays a role in calcium-mediated intracellular processes. Binds phospholipid membranes in a calcium-dependent manner. Plays a role in dendrite formation by melanocytes. In Homo sapiens (Human), this protein is Copine-6.